A 557-amino-acid polypeptide reads, in one-letter code: Polypyrimidine tract-binding protein 1 (557 aa).

Met1 is modified (N-acetylmethionine). Ser16 bears the Phosphoserine mark. 3 consecutive RRM domains span residues 59 to 143 (RVIH…SSPN), 184 to 260 (LRII…FSKL), and 363 to 437 (SVLL…LSKH). Residue Lys65 forms a Glycyl lysine isopeptide (Lys-Gly) (interchain with G-Cter in SUMO2) linkage. Phosphotyrosine is present on Tyr127. Thr138 is modified (phosphothreonine). Residue Ser141 is modified to Phosphoserine. Lys218 participates in a covalent cross-link: Glycyl lysine isopeptide (Lys-Gly) (interchain with G-Cter in SUMO2). Residue Ser459 is modified to Phosphoserine. In terms of domain architecture, RRM 4 spans 480–555 (ATLHLSNIPP…HHLRVSFSKS (76 aa)).

As to quaternary structure, monomer. Part of a ternary complex containing KHSRP, PTBP1, PTBP2 and HNRPH1. Interacts with RAVER1 and SFPQ. Interacts with IVNS1ABP (via BACK domain); the interaction is direct.

It is found in the nucleus. Its function is as follows. Plays a role in pre-mRNA splicing and in the regulation of alternative splicing events. Activates exon skipping of its own pre-mRNA during muscle cell differentiation. Binds to the polypyrimidine tract of introns. May promote RNA looping when bound to two separate polypyrimidine tracts in the same pre-mRNA. May promote the binding of U2 snRNP to pre-mRNA. Cooperates with RAVER1 to modulate switching between mutually exclusive exons during maturation of the TPM1 pre-mRNA. Represses the splicing of MAPT/Tau exon 10. Binds to polypyrimidine-rich controlling element (PCE) of CFTR and promotes exon skipping of CFTR exon 9, thereby antagonizing TIA1 and its role in exon inclusion of CFTR exon 9. Plays a role in the splicing of pyruvate kinase PKM by binding repressively to a polypyrimidine tract flanking PKM exon 9, inhibiting exon 9 inclusion and resulting in exon 10 inclusion and production of the PKM M2 isoform. In case of infection by picornaviruses, binds to the viral internal ribosome entry site (IRES) and stimulates the IRES-mediated translation. In Homo sapiens (Human), this protein is Polypyrimidine tract-binding protein 1 (PTBP1).